The chain runs to 368 residues: Protein-glutamate methylesterase/protein-glutamine glutaminase 1 (368 aa).

The Response regulatory domain occupies 4-121 (KVLVVDDSGF…SRNPDKVRQL (118 aa)). Residue Asp-55 is modified to 4-aspartylphosphate. The interval 138 to 176 (SLPPLPSATSSSHAPASSSSVGASARVGAGASPAPASTS) is disordered. The span at 144–176 (SATSSSHAPASSSSVGASARVGAGASPAPASTS) shows a compositional bias: low complexity. The CheB-type methylesterase domain occupies 172-368 (PASTSAAPKR…IGRHLVEACQ (197 aa)). Catalysis depends on residues Ser-192, His-219, and Asp-312.

Belongs to the CheB family. In terms of processing, phosphorylated by CheA. Phosphorylation of the N-terminal regulatory domain activates the methylesterase activity.

The protein resides in the cytoplasm. It catalyses the reaction [protein]-L-glutamate 5-O-methyl ester + H2O = L-glutamyl-[protein] + methanol + H(+). The enzyme catalyses L-glutaminyl-[protein] + H2O = L-glutamyl-[protein] + NH4(+). Involved in chemotaxis. Part of a chemotaxis signal transduction system that modulates chemotaxis in response to various stimuli. Catalyzes the demethylation of specific methylglutamate residues introduced into the chemoreceptors (methyl-accepting chemotaxis proteins or MCP) by CheR. Also mediates the irreversible deamidation of specific glutamine residues to glutamic acid. This chain is Protein-glutamate methylesterase/protein-glutamine glutaminase 1, found in Pseudomonas aeruginosa (strain ATCC 15692 / DSM 22644 / CIP 104116 / JCM 14847 / LMG 12228 / 1C / PRS 101 / PAO1).